Consider the following 568-residue polypeptide: Pyruvate carboxylase subunit B (568 aa).

A Pyruvate carboxyltransferase domain is found at 4–264; it reads IKVVETAFRD…DTGLDLEILK (261 aa). Substrate-binding positions include 12 to 16 and Arg83; that span reads RDAHQ. Residue Asp13 coordinates a divalent metal cation. Residues Lys174, His203, and His205 each coordinate a divalent metal cation. Lys174 carries the post-translational modification N6-carboxylysine. Thr339 provides a ligand contact to substrate. The Biotinyl-binding domain maps to 493–568; that stretch reads PEPVDVEGAV…ETGDIIMVIK (76 aa). N6-biotinyllysine is present on Lys534.

In terms of assembly, heterooctamer of four A and four B subunits. It depends on Mg(2+) as a cofactor. The cofactor is Mn(2+). Co(2+) serves as cofactor.

It carries out the reaction hydrogencarbonate + pyruvate + ATP = oxaloacetate + ADP + phosphate + H(+). Inhibited by ADP and alpha-ketoglutarate. Its function is as follows. Pyruvate carboxylase catalyzes a 2-step reaction, involving the ATP-dependent carboxylation of the covalently attached biotin in the first step and the transfer of the carboxyl group to pyruvate in the second. The protein is Pyruvate carboxylase subunit B (pycB) of Methanothermobacter thermautotrophicus (strain ATCC 29096 / DSM 1053 / JCM 10044 / NBRC 100330 / Delta H) (Methanobacterium thermoautotrophicum).